A 499-amino-acid chain; its full sequence is Putative ribose/galactose/methyl galactoside import ATP-binding protein 3 (499 aa).

2 ABC transporter domains span residues 8 to 243 (LRMR…VGRE) and 253 to 497 (SKIG…TGEE). 40-47 (GENGAGKS) is a binding site for ATP.

The protein belongs to the ABC transporter superfamily. Carbohydrate importer 2 (CUT2) (TC 3.A.1.2) family.

It localises to the cell inner membrane. It carries out the reaction D-ribose(out) + ATP + H2O = D-ribose(in) + ADP + phosphate + H(+). The enzyme catalyses D-galactose(out) + ATP + H2O = D-galactose(in) + ADP + phosphate + H(+). Part of an ABC transporter complex involved in carbohydrate import. Could be involved in ribose, galactose and/or methyl galactoside import. Responsible for energy coupling to the transport system. The polypeptide is Putative ribose/galactose/methyl galactoside import ATP-binding protein 3 (Agrobacterium fabrum (strain C58 / ATCC 33970) (Agrobacterium tumefaciens (strain C58))).